The primary structure comprises 315 residues: Leucine-rich repeat-containing protein 75B (315 aa).

Residues 1–23 (MGARLGRRAGPEAGSEAGAAAGC) are disordered. Low complexity predominate over residues 11–23 (PEAGSEAGAAAGC). 2 LRR repeats span residues 182–195 (LAVLDLSFTGLSDE) and 207–220 (LPRLTQLLLNGNRL). Residues 284 to 315 (PEGSAAGATTPASTWDSTAAGLGPEPQACCAR) are disordered. Residues 286–297 (GSAAGATTPAST) are compositionally biased toward low complexity.

It belongs to the LRRC75 family.

Its function is as follows. May suppress myogenic differentiation by modulating MYOG expression and Erk1/2 signaling. The sequence is that of Leucine-rich repeat-containing protein 75B from Homo sapiens (Human).